The sequence spans 348 residues: Probable dual-specificity RNA methyltransferase RlmN (348 aa).

Catalysis depends on Glu95, which acts as the Proton acceptor. In terms of domain architecture, Radical SAM core spans 101 to 335 (SGNRLTICVS…VSLRASRGLD (235 aa)). A disulfide bridge connects residues Cys108 and Cys340. Residues Cys115, Cys119, and Cys122 each contribute to the [4Fe-4S] cluster site. S-adenosyl-L-methionine is bound by residues 162–163 (GE), Ser192, 221–223 (SLH), and Asn297. Residue Cys340 is the S-methylcysteine intermediate of the active site.

It belongs to the radical SAM superfamily. RlmN family. [4Fe-4S] cluster serves as cofactor.

It is found in the cytoplasm. The catalysed reaction is adenosine(2503) in 23S rRNA + 2 reduced [2Fe-2S]-[ferredoxin] + 2 S-adenosyl-L-methionine = 2-methyladenosine(2503) in 23S rRNA + 5'-deoxyadenosine + L-methionine + 2 oxidized [2Fe-2S]-[ferredoxin] + S-adenosyl-L-homocysteine. It carries out the reaction adenosine(37) in tRNA + 2 reduced [2Fe-2S]-[ferredoxin] + 2 S-adenosyl-L-methionine = 2-methyladenosine(37) in tRNA + 5'-deoxyadenosine + L-methionine + 2 oxidized [2Fe-2S]-[ferredoxin] + S-adenosyl-L-homocysteine. Functionally, specifically methylates position 2 of adenine 2503 in 23S rRNA and position 2 of adenine 37 in tRNAs. The polypeptide is Probable dual-specificity RNA methyltransferase RlmN (Prochlorococcus marinus (strain SARG / CCMP1375 / SS120)).